The primary structure comprises 471 residues: Ribulose bisphosphate carboxylase large chain (471 aa).

Positions 1–2 (MS) are excised as a propeptide. Pro3 carries the post-translational modification N-acetylproline. An N6,N6,N6-trimethyllysine modification is found at Lys14. Asn123 and Thr173 together coordinate substrate. Lys175 (proton acceptor) is an active-site residue. Lys177 serves as a coordination point for substrate. Lys201, Asp203, and Glu204 together coordinate Mg(2+). Lys201 bears the N6-carboxylysine mark. Residue His294 is the Proton acceptor of the active site. Substrate-binding residues include Arg295, His327, and Ser379.

This sequence belongs to the RuBisCO large chain family. Type I subfamily. In terms of assembly, heterohexadecamer of 8 large chains and 8 small chains; disulfide-linked. The disulfide link is formed within the large subunit homodimers. Requires Mg(2+) as cofactor. In terms of processing, the disulfide bond which can form in the large chain dimeric partners within the hexadecamer appears to be associated with oxidative stress and protein turnover.

The protein localises to the plastid. The protein resides in the chloroplast. It catalyses the reaction 2 (2R)-3-phosphoglycerate + 2 H(+) = D-ribulose 1,5-bisphosphate + CO2 + H2O. The enzyme catalyses D-ribulose 1,5-bisphosphate + O2 = 2-phosphoglycolate + (2R)-3-phosphoglycerate + 2 H(+). Its function is as follows. RuBisCO catalyzes two reactions: the carboxylation of D-ribulose 1,5-bisphosphate, the primary event in carbon dioxide fixation, as well as the oxidative fragmentation of the pentose substrate in the photorespiration process. Both reactions occur simultaneously and in competition at the same active site. The protein is Ribulose bisphosphate carboxylase large chain of Drymophloeus subdistichus (Palm tree).